The following is an 810-amino-acid chain: Protein kinase C-binding protein NELL1 (810 aa).

Positions 1-21 are cleaved as a signal peptide; that stretch reads MPMDVILVLWFCVCTARTVLG. N-linked (GlcNAc...) asparagine glycosylation is found at Asn-40, Asn-53, Asn-83, Asn-224, Asn-294, and Asn-372. Residues 57-227 enclose the Laminin G-like domain; it reads AFLFQDVQRE…TQCPNLNRTC (171 aa). The region spanning 271 to 332 is the VWFC 1 domain; the sequence is KTCQVSGLLY…ISGQCCKVCR (62 aa). Intrachain disulfides connect Cys-395–Cys-407, Cys-401–Cys-416, and Cys-418–Cys-432. The Ca(2+) site is built by Asp-434, Ile-435, and Glu-437. The region spanning 434 to 475 is the EGF-like 1; calcium-binding domain; that stretch reads DIDECAAKMHYCHANTVCVNLPGLYRCDCVPGYIRVDDFSCT. Intrachain disulfides connect Cys-438–Cys-451, Cys-445–Cys-460, Cys-462–Cys-474, Cys-480–Cys-493, Cys-487–Cys-502, Cys-504–Cys-515, Cys-519–Cys-529, Cys-523–Cys-535, Cys-537–Cys-546, Cys-553–Cys-566, Cys-560–Cys-575, Cys-577–Cys-594, Cys-600–Cys-613, Cys-607–Cys-622, and Cys-624–Cys-630. Positions 453, 454, and 457 each coordinate Ca(2+). The 41-residue stretch at 476–516 folds into the EGF-like 2; calcium-binding domain; the sequence is EHDDCGSGQHNCDKNAICTNTVQGHSCTCQPGYVGNGTICK. An N-linked (GlcNAc...) asparagine glycan is attached at Asn-511. Positions 517–547 constitute an EGF-like 3 domain; it reads AFCEEGCRYGGTCVAPNKCVCPSGFTGSHCE. The EGF-like 4; calcium-binding domain occupies 549-587; it reads DIDECAEGFVECHNHSRCVNLPGWYHCECRSGFHDDGTY. A glycan (N-linked (GlcNAc...) asparagine) is linked at Asn-562. One can recognise an EGF-like 5; calcium-binding domain in the interval 596–631; that stretch reads DIDECALRTHTCWNDSACINLAGGFDCLCPSGPSCS. Asn-609 is a glycosylation site (N-linked (GlcNAc...) asparagine). VWFC domains lie at 632–687 and 692–750; these read GDCP…PECD and SQCL…PRCV. N-linked (GlcNAc...) asparagine glycosylation occurs at Asn-708.

As to quaternary structure, interacts with ATRAID; the interaction promotes osteoblast cell differentiation and mineralization. Homotrimer. Binds to PKC beta-1. Interacts with ROBO3.

The protein resides in the cytoplasm. The protein localises to the nucleus envelope. It is found in the secreted. Plays a role in the control of cell growth and differentiation. Promotes osteoblast cell differentiation and terminal mineralization. The protein is Protein kinase C-binding protein NELL1 (Nell1) of Rattus norvegicus (Rat).